We begin with the raw amino-acid sequence, 982 residues long: Probable DNA-directed RNA polymerase (982 aa).

The protein belongs to the RNA polymerase beta chain family.

The catalysed reaction is RNA(n) + a ribonucleoside 5'-triphosphate = RNA(n+1) + diphosphate. The presence of the two linear plasmids, termed pGKL1 and pGKL2, in strains of Kluyveromyces lactis confers the killer phenotype to the host cell, by promoting the secretion of a toxin able to inhibit the growth of sensitive strains. This is Probable DNA-directed RNA polymerase from Kluyveromyces lactis (strain ATCC 8585 / CBS 2359 / DSM 70799 / NBRC 1267 / NRRL Y-1140 / WM37) (Yeast).